Consider the following 132-residue polypeptide: Small ribosomal subunit protein uS8 (132 aa).

It belongs to the universal ribosomal protein uS8 family. In terms of assembly, part of the 30S ribosomal subunit. Contacts proteins S5 and S12.

Its function is as follows. One of the primary rRNA binding proteins, it binds directly to 16S rRNA central domain where it helps coordinate assembly of the platform of the 30S subunit. The polypeptide is Small ribosomal subunit protein uS8 (Bifidobacterium adolescentis (strain ATCC 15703 / DSM 20083 / NCTC 11814 / E194a)).